A 164-amino-acid polypeptide reads, in one-letter code: Translation initiation factor IF-3 (164 aa).

It belongs to the IF-3 family. Monomer.

The protein localises to the cytoplasm. In terms of biological role, IF-3 binds to the 30S ribosomal subunit and shifts the equilibrium between 70S ribosomes and their 50S and 30S subunits in favor of the free subunits, thus enhancing the availability of 30S subunits on which protein synthesis initiation begins. The polypeptide is Translation initiation factor IF-3 (Bordetella bronchiseptica (strain ATCC BAA-588 / NCTC 13252 / RB50) (Alcaligenes bronchisepticus)).